Here is a 100-residue protein sequence, read N- to C-terminus: Urease subunit gamma (100 aa).

The protein belongs to the urease gamma subunit family. As to quaternary structure, heterotrimer of UreA (gamma), UreB (beta) and UreC (alpha) subunits. Three heterotrimers associate to form the active enzyme.

The protein localises to the cytoplasm. It carries out the reaction urea + 2 H2O + H(+) = hydrogencarbonate + 2 NH4(+). Its pathway is nitrogen metabolism; urea degradation; CO(2) and NH(3) from urea (urease route): step 1/1. The sequence is that of Urease subunit gamma from Proteus hauseri.